Consider the following 249-residue polypeptide: Cell division protein FtsQ (249 aa).

The Cytoplasmic segment spans residues 1–6 (MKFILF). The helical transmembrane segment at 7–23 (ALLVSAGSWYGWKQLHS) threads the bilayer. At 24-249 (QDAVSKPIRY…YKNVMKERRI (226 aa)) the chain is on the periplasmic side. The 70-residue stretch at 29–98 (KPIRYVKIEG…DAVHIKITEQ (70 aa)) folds into the POTRA domain.

Belongs to the FtsQ/DivIB family. FtsQ subfamily. In terms of assembly, part of a complex composed of FtsB, FtsL and FtsQ.

It is found in the cell inner membrane. Essential cell division protein. May link together the upstream cell division proteins, which are predominantly cytoplasmic, with the downstream cell division proteins, which are predominantly periplasmic. May control correct divisome assembly. The chain is Cell division protein FtsQ from Methylomonas methanica (strain DSM 25384 / MC09).